Here is a 761-residue protein sequence, read N- to C-terminus: Wall-associated receptor kinase-like 4 (761 aa).

The N-terminal stretch at 1–26 is a signal peptide; that stretch reads MKKETQNLQCIPLVISVLSLFGVSSA. Residues 27 to 349 are Extracellular-facing; it reads RKPPYLCNRV…EPKKPGQIKP (323 aa). N64, N166, N206, N226, and N262 each carry an N-linked (GlcNAc...) asparagine glycan. The interval 278-339 is atypical EGF-like; that stretch reads CVCSYGYFSG…CVNKPGWFTC (62 aa). 3 cysteine pairs are disulfide-bonded: C280–C293, C316–C330, and C325–C339. The helical transmembrane segment at 350-370 threads the bilayer; it reads VFQGVLIGSALLLFAFGIFGL. Residues 371-761 lie on the Cytoplasmic side of the membrane; the sequence is YKFIKKQRRS…VEPLVPLRTW (391 aa). The 274-residue stretch at 424–697 folds into the Protein kinase domain; it reads FNTNRVLGQG…REVSVELERI (274 aa). ATP contacts are provided by residues 430–438 and K452; that span reads LGQGGQGTV. The residue at position 497 (Y497) is a Phosphotyrosine. Residue D549 is the Proton acceptor of the active site. Phosphothreonine occurs at positions 583 and 588. Position 596 is a phosphotyrosine (Y596). Positions 701–761 are disordered; sequence SYKSEIHNDD…VEPLVPLRTW (61 aa). Over residues 708 to 732 the composition is skewed to acidic residues; it reads NDDDDDDDDDDEDDQAMELNIEETW.

This sequence belongs to the protein kinase superfamily. Ser/Thr protein kinase family. In terms of tissue distribution, expressed in the whole plant. Detected in root-shoot junctions and lateral root initiation sites.

The protein localises to the membrane. The enzyme catalyses L-seryl-[protein] + ATP = O-phospho-L-seryl-[protein] + ADP + H(+). It carries out the reaction L-threonyl-[protein] + ATP = O-phospho-L-threonyl-[protein] + ADP + H(+). Serine/threonine-protein kinase that may function as a signaling receptor of extracellular matrix component. Plays a role in plant mineral nutrients response. The chain is Wall-associated receptor kinase-like 4 (WAKL4) from Arabidopsis thaliana (Mouse-ear cress).